The primary structure comprises 241 residues: MLMDSLQEIICEKRTYTRLYHSHKHAYSQFLFPLEGSIDLETEGRQVKLNPDHFLYIPPQCEHRFRSIGRNECLVLDVPLHAMKIDEYRAGSGIEAALDPFWSSIRYLLTEEAKAGTANSLHMLVQYIKEKLQSHSYASIAYIHSHLFERLTIKKLAEIEHYHPAYYSSWFKKQTGKSPQNYIADLRLEEAKRMLMERNETLTVVSEALGFQNLSSFTRWFTKSTGMPPRLYRNTLYSDKK.

In terms of domain architecture, Cupin type-2 spans serine 22–valine 78. The region spanning tyrosine 137–threonine 235 is the HTH araC/xylS-type domain. 2 DNA-binding regions (H-T-H motif) span residues lysine 154–threonine 175 and leucine 202–threonine 225.

This is an uncharacterized protein from Bacillus subtilis (strain 168).